Consider the following 175-residue polypeptide: Nucleoside triphosphate/diphosphate phosphatase (175 aa).

The active-site Proton donor is the arginine 23. 6 residues coordinate Mg(2+): asparagine 87, aspartate 103, aspartate 105, aspartate 107, aspartate 120, and glutamate 123.

It belongs to the Ntdp family. The cofactor is Mg(2+).

It catalyses the reaction a ribonucleoside 5'-triphosphate + H2O = a ribonucleoside 5'-diphosphate + phosphate + H(+). The enzyme catalyses a ribonucleoside 5'-diphosphate + H2O = a ribonucleoside 5'-phosphate + phosphate + H(+). Its function is as follows. Has nucleoside phosphatase activity towards nucleoside triphosphates and nucleoside diphosphates. The protein is Nucleoside triphosphate/diphosphate phosphatase of Shouchella clausii (strain KSM-K16) (Alkalihalobacillus clausii).